The following is a 549-amino-acid chain: T-complex protein 1 subunit theta (549 aa).

The protein belongs to the TCP-1 chaperonin family. Heterooligomeric complex of about 850 to 900 kDa that forms two stacked rings, 12 to 16 nm in diameter. Interacts with CCT3, KNAT1, STM and TTG1. As to expression, expressed in shoot meristems, root tip, vasculature and leaf epidermis.

It is found in the cytoplasm. Functionally, molecular chaperone; assists the folding of proteins upon ATP hydrolysis. Known to play a role, in vitro, in the folding of actin and tubulin. Contributes to stem cell maintenance through its impact on transcription factors trafficking through plasmodesmata. Probably involved in refolding translocated, partially unfolded proteins, including viral movement proteins. In Arabidopsis thaliana (Mouse-ear cress), this protein is T-complex protein 1 subunit theta.